The chain runs to 512 residues: Bifunctional purine biosynthesis protein PurH (512 aa).

The 144-residue stretch at 1-144 (MKRALVSVSD…KNYHDVTIVV (144 aa)) folds into the MGS-like domain.

Belongs to the PurH family.

It carries out the reaction (6R)-10-formyltetrahydrofolate + 5-amino-1-(5-phospho-beta-D-ribosyl)imidazole-4-carboxamide = 5-formamido-1-(5-phospho-D-ribosyl)imidazole-4-carboxamide + (6S)-5,6,7,8-tetrahydrofolate. The catalysed reaction is IMP + H2O = 5-formamido-1-(5-phospho-D-ribosyl)imidazole-4-carboxamide. The protein operates within purine metabolism; IMP biosynthesis via de novo pathway; 5-formamido-1-(5-phospho-D-ribosyl)imidazole-4-carboxamide from 5-amino-1-(5-phospho-D-ribosyl)imidazole-4-carboxamide (10-formyl THF route): step 1/1. It participates in purine metabolism; IMP biosynthesis via de novo pathway; IMP from 5-formamido-1-(5-phospho-D-ribosyl)imidazole-4-carboxamide: step 1/1. This chain is Bifunctional purine biosynthesis protein PurH, found in Limosilactobacillus reuteri (strain DSM 20016) (Lactobacillus reuteri).